Consider the following 134-residue polypeptide: UPF0412 protein YaaI (134 aa).

The N-terminal stretch at 1–23 is a signal peptide; that stretch reads MRSVLTISVGLLFGLALSSVAHA.

Belongs to the UPF0412 family.

The sequence is that of UPF0412 protein YaaI from Salmonella paratyphi A (strain ATCC 9150 / SARB42).